Here is a 533-residue protein sequence, read N- to C-terminus: Tyrosine-protein kinase transforming protein Fps (533 aa).

A disordered region spans residues 1–46 (ASGQLHRPQPQEHTSTSAAAGTWRHTQASESRHRLPHCSAAPSHQD). A compositionally biased stretch (polar residues) spans 11–29 (QEHTSTSAAAGTWRHTQAS). The F-BAR; degenerate domain maps to 50 to 124 (MGFGPELWCP…LQEDRQSVCS (75 aa)). In terms of domain architecture, SH2 spans 171–260 (WYHGAIPRSE…KSGIVLTRAV (90 aa)). Residues 272–525 (VLLGERIGRG…PSFGAVHQDL (254 aa)) enclose the Protein kinase domain. ATP is bound by residues 278-286 (IGRGNFGEV) and lysine 301. The active-site Proton acceptor is aspartate 394. A Phosphotyrosine; by autocatalysis modification is found at tyrosine 424.

This sequence belongs to the protein kinase superfamily. Tyr protein kinase family. Fes/fps subfamily.

It carries out the reaction L-tyrosyl-[protein] + ATP = O-phospho-L-tyrosyl-[protein] + ADP + H(+). This is Tyrosine-protein kinase transforming protein Fps (V-FPS) from Gallus gallus (Chicken).